The primary structure comprises 67 residues: DNA-directed RNA polymerase subunit omega (67 aa).

This sequence belongs to the RNA polymerase subunit omega family. In terms of assembly, the RNAP catalytic core consists of 2 alpha, 1 beta, 1 beta' and 1 omega subunit. When a sigma factor is associated with the core the holoenzyme is formed, which can initiate transcription.

The catalysed reaction is RNA(n) + a ribonucleoside 5'-triphosphate = RNA(n+1) + diphosphate. Its function is as follows. Promotes RNA polymerase assembly. Latches the N- and C-terminal regions of the beta' subunit thereby facilitating its interaction with the beta and alpha subunits. The chain is DNA-directed RNA polymerase subunit omega from Burkholderia ambifaria (strain MC40-6).